The sequence spans 294 residues: Pyridoxal 5'-phosphate synthase subunit PdxS (294 aa).

D24 serves as a coordination point for D-ribose 5-phosphate. The active-site Schiff-base intermediate with D-ribose 5-phosphate is K81. Residue G153 coordinates D-ribose 5-phosphate. R165 is a D-glyceraldehyde 3-phosphate binding site. D-ribose 5-phosphate contacts are provided by residues G214 and 235–236 (GS).

It belongs to the PdxS/SNZ family. Homohexamer and homododecamer. In the presence of PdxT, forms a dodecamer of heterodimers.

It carries out the reaction aldehydo-D-ribose 5-phosphate + D-glyceraldehyde 3-phosphate + L-glutamine = pyridoxal 5'-phosphate + L-glutamate + phosphate + 3 H2O + H(+). Its pathway is cofactor biosynthesis; pyridoxal 5'-phosphate biosynthesis. Its function is as follows. Catalyzes the formation of pyridoxal 5'-phosphate from ribose 5-phosphate (RBP), glyceraldehyde 3-phosphate (G3P) and ammonia. The ammonia is provided by the PdxT subunit. Can also use ribulose 5-phosphate and dihydroxyacetone phosphate as substrates, resulting from enzyme-catalyzed isomerization of RBP and G3P, respectively. This chain is Pyridoxal 5'-phosphate synthase subunit PdxS, found in Geobacillus kaustophilus (strain HTA426).